Consider the following 178-residue polypeptide: MVAVPTAWCSVALALLLALQEGKGQVAAAPDHPAPSPRARGSHLRPRRCSCSSWLDKECVYFCHLDIIWVNTPGQTAPYGLGNPPRRRRRSLPKRCECSSSGDPACATFCHRRPWAEAVVVPGSRSPADVFQAGQRWTSAGELLQQLREISATKIRFARQHQEAEREPRPMYPRRRKT.

The N-terminal stretch at 1–24 (MVAVPTAWCSVALALLLALQEGKG) is a signal peptide. A propeptide spanning residues 25–46 (QVAAAPDHPAPSPRARGSHLRP) is cleaved from the precursor. Disulfide bonds link Cys49/Cys63 and Cys51/Cys59. Positions 70 to 178 (VNTPGQTAPY…RPMYPRRRKT (109 aa)) are excised as a propeptide. An endothelin-like region spans residues 96–111 (CECSSSGDPACATFCH). A disordered region spans residues 158 to 178 (ARQHQEAEREPRPMYPRRRKT). The segment covering 160-169 (QHQEAEREPR) has biased composition (basic and acidic residues).

The protein belongs to the endothelin/sarafotoxin family.

The protein resides in the secreted. Endothelins are endothelium-derived vasoconstrictor peptides. This is Endothelin-2 (EDN2) from Mustela putorius furo (European domestic ferret).